Here is a 363-residue protein sequence, read N- to C-terminus: UDP-N-acetylglucosamine--N-acetylmuramyl-(pentapeptide) pyrophosphoryl-undecaprenol N-acetylglucosamine transferase (363 aa).

Residues 14-16, Asn122, Arg163, Ser190, and Gln285 each bind UDP-N-acetyl-alpha-D-glucosamine; that span reads TGG.

The protein belongs to the glycosyltransferase 28 family. MurG subfamily.

It is found in the cell inner membrane. The enzyme catalyses di-trans,octa-cis-undecaprenyl diphospho-N-acetyl-alpha-D-muramoyl-L-alanyl-D-glutamyl-meso-2,6-diaminopimeloyl-D-alanyl-D-alanine + UDP-N-acetyl-alpha-D-glucosamine = di-trans,octa-cis-undecaprenyl diphospho-[N-acetyl-alpha-D-glucosaminyl-(1-&gt;4)]-N-acetyl-alpha-D-muramoyl-L-alanyl-D-glutamyl-meso-2,6-diaminopimeloyl-D-alanyl-D-alanine + UDP + H(+). It functions in the pathway cell wall biogenesis; peptidoglycan biosynthesis. Cell wall formation. Catalyzes the transfer of a GlcNAc subunit on undecaprenyl-pyrophosphoryl-MurNAc-pentapeptide (lipid intermediate I) to form undecaprenyl-pyrophosphoryl-MurNAc-(pentapeptide)GlcNAc (lipid intermediate II). The chain is UDP-N-acetylglucosamine--N-acetylmuramyl-(pentapeptide) pyrophosphoryl-undecaprenol N-acetylglucosamine transferase from Prochlorococcus marinus (strain AS9601).